Reading from the N-terminus, the 544-residue chain is Ell-associated factor Eaf (544 aa).

The segment at 147–544 (QSVPMNMGHQ…LSSNSSDDDD (398 aa)) is disordered. Residues 193–202 (SSKDKVDFKP) are compositionally biased toward basic and acidic residues. Phosphoserine is present on Ser-205. The span at 264–273 (SGSSTGSSSG) shows a compositional bias: low complexity. A compositionally biased stretch (basic residues) spans 287-299 (GKQRQAHGKRQQI). 3 stretches are compositionally biased toward low complexity: residues 305 to 319 (PPVQ…QQQP), 333 to 374 (QPHP…QQRP), and 396 to 407 (ASQSVAQAAAVL). Over residues 425-440 (DSSDSDSGSDSDDSTE) the composition is skewed to acidic residues. 3 stretches are compositionally biased toward low complexity: residues 450–483 (EQQQ…HMNQ), 503–513 (QQPQPQPQQQQ), and 526–544 (NDLL…DDDD).

Belongs to the EAF family.

It is found in the nucleus. Promotes transcriptional elongation by Su(Tpl)/ELL. Essential for development. This is Ell-associated factor Eaf from Drosophila persimilis (Fruit fly).